The primary structure comprises 512 residues: Tyrosine-protein kinase Lyn (512 aa).

Residues 1–62 (MGCIKSKGKD…GQRFQTKDPE (62 aa)) are disordered. Gly-2 is lipidated: N-myristoyl glycine. Cys-3 carries S-palmitoyl cysteine lipidation. Residues Ser-11 and Ser-13 each carry the phosphoserine modification. The SH3 domain occupies 63–123 (EQGDIVVALY…PSNYVAKLNT (61 aa)). The SH2 domain occupies 129–226 (WFFKDITRKD…GLCRRLEKAC (98 aa)). The residue at position 193 (Tyr-193) is a Phosphotyrosine. Ser-228 carries the phosphoserine modification. Residues 247-501 (IKLVKRLGAG…YLQSVLDDFY (255 aa)) form the Protein kinase domain. ATP-binding positions include 253 to 261 (LGAGQFGEV) and Lys-275. Tyr-306 and Tyr-316 each carry phosphotyrosine. Asp-367 serves as the catalytic Proton acceptor. Residue Tyr-397 is modified to Phosphotyrosine; by autocatalysis. Phosphotyrosine occurs at positions 460 and 473. A Phosphotyrosine; by autocatalysis, CSK and MATK modification is found at Tyr-508.

The protein belongs to the protein kinase superfamily. Tyr protein kinase family. SRC subfamily. In terms of assembly, interacts with TEC. Interacts (via SH2 domain) with FLT3 (tyrosine phosphorylated). Interacts with LIME1 and with CD79A upon activation of the B-cell antigen receptor. Interacts with the B-cell receptor complex. Interacts with phosphorylated THEMIS2. Interacts with EPOR. Interacts with MS4A2/FCER1B. Interaction (via the SH2 and SH3 domains) with MUC1 is stimulated by IL7 and the subsequent phosphorylation increases the binding between MUC1 and CTNNB1/beta-catenin. Interacts with ADAM15. Interacts with NDFIP2 and more weakly with NDFIP1. Interacts with FASLG. Interacts with KIT. Interacts with HCLS1. Interacts with FCGR2B. Interacts with FCGR1A; the interaction may be indirect. Interacts with CD19, CD22, CD79A and CD79B. Interacts (via SH3 domain) with CBLC, PPP1R15A and PDE4A. Interacts with TGFB1I1. Interacts (via SH3 domain) with PIK3R1, the regulatory subunit of phosphatidylinositol 3-kinase; this interaction enhances phosphatidylinositol 3-kinase activity. Interacts with CSF2RB, the common subunit of the IL3, IL5 and CSF2 receptors. Interacts with PAG1; identified in a complex with PAG1 and STAT3. Interacts with ABL1. Interacts with PTPN6/SHP-1. Interacts (via SH3 domain) with SCIMP (via proline-rich region). This interaction facilitates the phosphorylation of SCIMP on 'Tyr-107', which enhances binding of SCIMP to TLR4, and consequently the phosphorylation of TLR4 in response to stimulation by lipopolysaccharide in macrophages. Interacts with LPXN (via LD motif 3) and the interaction is induced upon B-cell antigen receptor (BCR) activation. Interacts (via SH3-domain) with ANKRD54 (via ankyrin repeat region) in an activation-independent status of LYN. Forms a multiprotein complex with ANKRD54 and HCLS1. Interacts (via SH2 and SH3 domains) with UNC119; leading to LYN activation. Interacts with CD36. Interacts with LYN. Interacts with SKAP1 and FYB1; this interaction promotes the phosphorylation of CLNK. Interacts with BCAR1/CAS and NEDD9/HEF1. (Microbial infection) Interacts with Epstein-Barr virus LMP2A. As to quaternary structure, (Microbial infection) Interacts with Herpes virus saimiri tyrosine kinase interacting protein (Tip). Ubiquitinated by CBL, leading to its degradation. Ubiquitination is SH3-dependent. Post-translationally, autophosphorylated. Phosphorylated on tyrosine residues in response to KIT signaling. Phosphorylation at Tyr-397 is required for optimal activity. Phosphorylation at Tyr-508 inhibits kinase activity. Phosphorylated at Tyr-508 by CSK. Dephosphorylated by PTPRC/CD45. Becomes rapidly phosphorylated upon activation of the B-cell receptor and the immunoglobulin receptor FCGR1A. Phosphorylated in response to ITGB1 in B-cells. In terms of tissue distribution, detected in monocytes (at protein level). Detected in placenta, and in fetal brain, lung, liver and kidney. Widely expressed in a variety of organs, tissues, and cell types such as epidermoid, hematopoietic, and neuronal cells. Expressed in primary neuroblastoma tumors.

The protein resides in the cell membrane. It is found in the nucleus. The protein localises to the cytoplasm. Its subcellular location is the perinuclear region. It localises to the golgi apparatus. The protein resides in the membrane. The catalysed reaction is L-tyrosyl-[protein] + ATP = O-phospho-L-tyrosyl-[protein] + ADP + H(+). Its activity is regulated as follows. Subject to autoinhibition, mediated by intramolecular interactions between the SH2 domain and the C-terminal phosphotyrosine. Phosphorylation at Tyr-397 is required for optimal activity. Phosphorylated by CSK at Tyr-508; phosphorylation at Tyr-508 inhibits kinase activity. Kinase activity is modulated by dephosphorylation by PTPRC/CD45. Inhibited by Dasatinib, PP2, and SU6656. Functionally, non-receptor tyrosine-protein kinase that transmits signals from cell surface receptors and plays an important role in the regulation of innate and adaptive immune responses, hematopoiesis, responses to growth factors and cytokines, integrin signaling, but also responses to DNA damage and genotoxic agents. Functions primarily as negative regulator, but can also function as activator, depending on the context. Required for the initiation of the B-cell response, but also for its down-regulation and termination. Plays an important role in the regulation of B-cell differentiation, proliferation, survival and apoptosis, and is important for immune self-tolerance. Acts downstream of several immune receptors, including the B-cell receptor, CD79A, CD79B, CD5, CD19, CD22, FCER1, FCGR2, FCGR1A, TLR2 and TLR4. Plays a role in the inflammatory response to bacterial lipopolysaccharide. Mediates the responses to cytokines and growth factors in hematopoietic progenitors, platelets, erythrocytes, and in mature myeloid cells, such as dendritic cells, neutrophils and eosinophils. Acts downstream of EPOR, KIT, MPL, the chemokine receptor CXCR4, as well as the receptors for IL3, IL5 and CSF2. Plays an important role in integrin signaling. Regulates cell proliferation, survival, differentiation, migration, adhesion, degranulation, and cytokine release. Involved in the regulation of endothelial activation, neutrophil adhesion and transendothelial migration. Down-regulates signaling pathways by phosphorylation of immunoreceptor tyrosine-based inhibitory motifs (ITIM), that then serve as binding sites for phosphatases, such as PTPN6/SHP-1, PTPN11/SHP-2 and INPP5D/SHIP-1, that modulate signaling by dephosphorylation of kinases and their substrates. Phosphorylates LIME1 in response to CD22 activation. Phosphorylates BTK, CBL, CD5, CD19, CD72, CD79A, CD79B, CSF2RB, DOK1, HCLS1, LILRB3/PIR-B, MS4A2/FCER1B, SYK and TEC. Promotes phosphorylation of SIRPA, PTPN6/SHP-1, PTPN11/SHP-2 and INPP5D/SHIP-1. Mediates phosphorylation of the BCR-ABL fusion protein. Required for rapid phosphorylation of FER in response to FCER1 activation. Mediates KIT phosphorylation. Acts as an effector of EPOR (erythropoietin receptor) in controlling KIT expression and may play a role in erythroid differentiation during the switch between proliferation and maturation. Depending on the context, activates or inhibits several signaling cascades. Regulates phosphatidylinositol 3-kinase activity and AKT1 activation. Regulates activation of the MAP kinase signaling cascade, including activation of MAP2K1/MEK1, MAPK1/ERK2, MAPK3/ERK1, MAPK8/JNK1 and MAPK9/JNK2. Mediates activation of STAT5A and/or STAT5B. Phosphorylates LPXN on 'Tyr-72'. Kinase activity facilitates TLR4-TLR6 heterodimerization and signal initiation. Phosphorylates SCIMP on 'Tyr-107'; this enhances binding of SCIMP to TLR4, promoting the phosphorylation of TLR4, and a selective cytokine response to lipopolysaccharide in macrophages. Phosphorylates CLNK. Phosphorylates BCAR1/CAS and NEDD9/HEF1. The protein is Tyrosine-protein kinase Lyn (LYN) of Homo sapiens (Human).